A 201-amino-acid polypeptide reads, in one-letter code: Holliday junction branch migration complex subunit RuvA (201 aa).

Positions 1-64 (MIGFIRGLLV…EDAHSLFGFG (64 aa)) are domain I. The interval 65–143 (TEAERGLFRS…IGVPSLAPAS (79 aa)) is domain II. The flexible linker stretch occupies residues 144–153 (FAGGAAPLPA). The interval 153–201 (AADPADEAVSALIALGFKPQEANTLVARQAAEGRSAEDLIRAALQSAVR) is domain III.

The protein belongs to the RuvA family. Homotetramer. Forms an RuvA(8)-RuvB(12)-Holliday junction (HJ) complex. HJ DNA is sandwiched between 2 RuvA tetramers; dsDNA enters through RuvA and exits via RuvB. An RuvB hexamer assembles on each DNA strand where it exits the tetramer. Each RuvB hexamer is contacted by two RuvA subunits (via domain III) on 2 adjacent RuvB subunits; this complex drives branch migration. In the full resolvosome a probable DNA-RuvA(4)-RuvB(12)-RuvC(2) complex forms which resolves the HJ.

It localises to the cytoplasm. The RuvA-RuvB-RuvC complex processes Holliday junction (HJ) DNA during genetic recombination and DNA repair, while the RuvA-RuvB complex plays an important role in the rescue of blocked DNA replication forks via replication fork reversal (RFR). RuvA specifically binds to HJ cruciform DNA, conferring on it an open structure. The RuvB hexamer acts as an ATP-dependent pump, pulling dsDNA into and through the RuvAB complex. HJ branch migration allows RuvC to scan DNA until it finds its consensus sequence, where it cleaves and resolves the cruciform DNA. This chain is Holliday junction branch migration complex subunit RuvA, found in Methylococcus capsulatus (strain ATCC 33009 / NCIMB 11132 / Bath).